The sequence spans 173 residues: Putative C-type lectin protein FPV198 (173 aa).

The C-type lectin domain occupies 50-169 (GMSGWVQINN…CNKKHTGICF (120 aa)).

The chain is Putative C-type lectin protein FPV198 from Vertebrata (FPV).